The following is a 216-amino-acid chain: Superoxide dismutase [Cu-Zn] 2, chloroplastic (216 aa).

Residues 1 to 62 (MAATNTILAF…APSKALTVVS (62 aa)) constitute a chloroplast transit peptide. Residues His108, His110, and His125 each contribute to the Cu cation site. A disulfide bridge links Cys119 with Cys208. Zn(2+) is bound by residues His125, His133, His142, and Asp145. His182 is a binding site for Cu cation.

It belongs to the Cu-Zn superoxide dismutase family. In terms of assembly, homotetramer. Cu cation serves as cofactor. Requires Zn(2+) as cofactor. As to expression, expressed in leaves (at protein level). The spatial localization is regulated by miR398-mediated silencing. Mostly present in flowers, old rosette leaves and inflorescence, and, to a lower extent, in cauline leaves, stems and roots.

Its subcellular location is the plastid. It is found in the chloroplast. The enzyme catalyses 2 superoxide + 2 H(+) = H2O2 + O2. In terms of biological role, destroys radicals which are normally produced within the cells and which are toxic to biological systems. Mediates tolerance to stress, including photo-oxidative stress. In Arabidopsis thaliana (Mouse-ear cress), this protein is Superoxide dismutase [Cu-Zn] 2, chloroplastic (CSD2).